We begin with the raw amino-acid sequence, 155 residues long: Ribosomal RNA large subunit methyltransferase H (155 aa).

Leu-72 and Gly-104 together coordinate S-adenosyl-L-methionine.

Belongs to the RNA methyltransferase RlmH family. In terms of assembly, homodimer.

The protein localises to the cytoplasm. The enzyme catalyses pseudouridine(1915) in 23S rRNA + S-adenosyl-L-methionine = N(3)-methylpseudouridine(1915) in 23S rRNA + S-adenosyl-L-homocysteine + H(+). Specifically methylates the pseudouridine at position 1915 (m3Psi1915) in 23S rRNA. The polypeptide is Ribosomal RNA large subunit methyltransferase H (Fusobacterium nucleatum subsp. nucleatum (strain ATCC 25586 / DSM 15643 / BCRC 10681 / CIP 101130 / JCM 8532 / KCTC 2640 / LMG 13131 / VPI 4355)).